The following is a 204-amino-acid chain: Terpene cyclase trt1 (204 aa).

The next 5 helical transmembrane spans lie at 44–64, 67–87, 103–122, 132–154, and 169–189; these read FMSICCDVAWEFVYAFVYPIA, HWAGGIRIWFAMHCVMLFIVA, FARLAYVAITIGFMAGHLAL, FFWSGALCQITASLGSLCLLVCR, and WFYIAITLTLDAIYPVFFFYF.

The protein belongs to the paxB family.

The protein resides in the membrane. It functions in the pathway secondary metabolite biosynthesis; terpenoid biosynthesis. Its function is as follows. Terpene cyclase; part of the gene cluster that mediates the biosynthesis of terretonin, a fungal meroterpenoid that acts as a mycotoxin. The first step of the pathway is the synthesis of 3,5-dimethylorsellinic acid (DMOA) by the polyketide synthase trt4. DMOA is then prenylated into farnesyl-DMOA by the polyprenyl transferase trt2. Methylation by the methyltransferase trt5 then leads to farnesyl-DMOA methyl ester which is further subject to epoxidation by the FAD-dependent monooxygenase trt8 to yield epoxyfarnesyl-DMOA methyl ester. Cyclization of epoxyfarnesyl-DMOA methyl ester by the terpene cyclase trt1 leads to a tetracycle intermediate which is in turn converted to preterretonin. Dehydrogenase trt9 comes next to transform preterretonin to preterrenoid. The FAD-dependent monooxygenase trt3 is then required for the C-hydroxylation at C16 of preterrenoid to yield terrenoid. The cytochrome P450 trt6 catalyzes three successive oxidations to transform terrenoid into an unstable intermediate, which then undergoes the D-ring expansion and unusual rearrangement of the methoxy group to afford the core skeleton of terretonin. Trt14 catalyzes the D-ring expansion of terretonin involving intramolecular methoxy rearrangement as well as the hydrolysis of the expanded D-ring and the methyl ester moiety. Finally, the nonheme iron-dependent dioxygenase trt7 accomplishes the last two oxidation reactions steps to complete the biosynthesis of terretonin. Terretonin C is produced via spontaneous decarboxylation of the terretonin precursor. Another shunt product of the terretonin biosynthesis is dihydrofarnesyl-DMOA, derived from epoxyfarnesyl-DMOA through hydrolysis of the epoxide. This is Terpene cyclase trt1 from Aspergillus terreus (strain NIH 2624 / FGSC A1156).